Reading from the N-terminus, the 512-residue chain is Protein spinster homolog 3 (512 aa).

Residues 1-30 are disordered; the sequence is MAGGMSAECPEPGPGGLQGQSPGPGRQCPP. 12 helical membrane-spanning segments follow: residues 50-70, 84-104, 112-132, 145-165, 173-193, 204-224, 260-280, 309-329, 343-365, 377-397, 411-431, and 450-470; these read VLCYINLLNYMNWFIIAGVLL, GLLQTVFVSCLLLSAPVFGYL, ATMSFGILLWSGAGLSSSFIS, IVGTGSASYSTIAPTVLGDLF, VLAVFYIFIPVGSGLGYVLGS, WALRVMPCLEAVALILLILLV, FVWSTLGVTAMAFVTGALGFW, LIFGALTIMTGVIGVILGAEA, LICASSLLATAPCLYLALVLAPT, GELLLSCNWAVVADILLSVVV, VGHILGDAGSPYLTGLISSVL, and FLCCAFVIALGGGCFLLTALY. The disordered stretch occupies residues 481-512; the sequence is PVTGTPDSNDVDSNDLERQGLLSGAGASTEEP.

This sequence belongs to the major facilitator superfamily. Spinster (TC 2.A.1.49) family.

The protein localises to the membrane. Functionally, sphingolipid transporter. This is Protein spinster homolog 3 (SPNS3) from Homo sapiens (Human).